The chain runs to 277 residues: Photosystem I assembly factor PSA3, chloroplastic (277 aa).

Residues 1–45 constitute a chloroplast transit peptide; the sequence is MVVVTHISTSFHQISPSFFHLRLRNPSTTSSSRPKLDGGFALSIR.

In terms of assembly, interacts with PYG7.

The protein resides in the plastid. Its subcellular location is the chloroplast. It is found in the chloroplast thylakoid membrane. Its function is as follows. Nuclear genome-encoded factor required for the accumulation of photosystem I (PSI). Functions as a PSI biogenesis factor. Cooperates with PYG7 to promote the stable assembly of PSI in the thylakoid membrane. May target primarily the PsaC subunit. Does not seem to be required for the expression of chloroplast genes encoding PSI subunits. The chain is Photosystem I assembly factor PSA3, chloroplastic from Arabidopsis thaliana (Mouse-ear cress).